The following is a 157-amino-acid chain: Small ribosomal subunit protein uS7 (157 aa).

Belongs to the universal ribosomal protein uS7 family. In terms of assembly, part of the 30S ribosomal subunit. Contacts proteins S9 and S11.

In terms of biological role, one of the primary rRNA binding proteins, it binds directly to 16S rRNA where it nucleates assembly of the head domain of the 30S subunit. Is located at the subunit interface close to the decoding center, probably blocks exit of the E-site tRNA. This chain is Small ribosomal subunit protein uS7, found in Polaromonas sp. (strain JS666 / ATCC BAA-500).